We begin with the raw amino-acid sequence, 597 residues long: Fructan 1-exohydrolase (597 aa).

An N-terminal signal peptide occupies residues 1–15 (MAQAWAFLLPVLVFG). Residue aspartate 76 is part of the active site. Asparagine 169, asparagine 237, and asparagine 249 each carry an N-linked (GlcNAc...) asparagine glycan. Residues cysteine 447 and cysteine 493 are joined by a disulfide bond. An N-linked (GlcNAc...) asparagine glycan is attached at asparagine 568.

Belongs to the glycosyl hydrolase 32 family.

It catalyses the reaction Hydrolysis of terminal, non-reducing (2-&gt;1)-linked beta-D-fructofuranose residues in fructans.. Its activity is regulated as follows. Inhibited by sucrose. Hydrolyzes inulin-type beta-(2,1)-fructans. May play a role as a beta-(2,1)-trimmer during graminan biosynthesis. The sequence is that of Fructan 1-exohydrolase from Triticum urartu (Red wild einkorn).